The following is a 144-amino-acid chain: Methylglyoxal synthase (144 aa).

An MGS-like domain is found at 1–144 (MKIALIAHDE…KSGEEKETER (144 aa)). Substrate contacts are provided by residues His8, Lys12, 34–37 (TGTT), and 54–55 (SG). The Proton donor/acceptor role is filled by Asp60. His87 is a binding site for substrate.

This sequence belongs to the methylglyoxal synthase family.

The enzyme catalyses dihydroxyacetone phosphate = methylglyoxal + phosphate. Catalyzes the formation of methylglyoxal from dihydroxyacetone phosphate. The polypeptide is Methylglyoxal synthase (Geobacillus thermodenitrificans (strain NG80-2)).